Here is a 467-residue protein sequence, read N- to C-terminus: Hydroxyacid-oxoacid transhydrogenase, mitochondrial (467 aa).

N6-acetyllysine is present on Lys445. Phosphoserine is present on Ser452.

Belongs to the iron-containing alcohol dehydrogenase family. Hydroxyacid-oxoacid transhydrogenase subfamily.

It localises to the mitochondrion. The catalysed reaction is (S)-3-hydroxybutanoate + 2-oxoglutarate = (R)-2-hydroxyglutarate + acetoacetate. The enzyme catalyses 4-hydroxybutanoate + 2-oxoglutarate = (R)-2-hydroxyglutarate + succinate semialdehyde. In terms of biological role, catalyzes the cofactor-independent reversible oxidation of gamma-hydroxybutyrate (GHB) to succinic semialdehyde (SSA) coupled to reduction of 2-ketoglutarate (2-KG) to D-2-hydroxyglutarate (D-2-HG). L-3-hydroxybutyrate (L-3-OHB) is also a substrate for HOT when using 2-KG as hydrogen acceptor, resulting in the formation of D-2-HG. This is Hydroxyacid-oxoacid transhydrogenase, mitochondrial (ADHFE1) from Pongo abelii (Sumatran orangutan).